The primary structure comprises 431 residues: MSASALDAFFGARLADTDPDLFAALEKEFHRQEDGIELIASENIVSAAVLEAQGSVLTNKYAEGYPGKRYYGGCAAVDIAEQLAIDRAKQLFGCEFANVQPHSGAQANGAVFFALAKPGDTILGMSLAAGGHLTHGAAPTVSGKWFNAVQYGVRKEDGLLDYEELEALAREHKPKIIIAGGSAYPRFIDFPRIRKVADEVGAYFMVDMAHFAGLVAAGIYPSPLPHAHVVTTTTHKTLRGPRGGMILTNDLELGKKFNTAVFPGLQGGPLMHVIAAKAVAFGEALKPDFKTYQQSVANNAKVLASTLVERGLAIVSGGTDTHLMLVDLRPKNVTGKATDESLGRAHITTNKNAIPFDPQKPAVTSGIRLGTPAGTSRGFGEAEFREIGLMIDRVVEGLSKAGENGSNEAVEQEVGAEVKALCKRFPLYRNH.

Residues L127 and G131–L133 each bind (6S)-5,6,7,8-tetrahydrofolate. An N6-(pyridoxal phosphate)lysine modification is found at K236.

It belongs to the SHMT family. Homodimer. Pyridoxal 5'-phosphate is required as a cofactor.

The protein resides in the cytoplasm. The catalysed reaction is (6R)-5,10-methylene-5,6,7,8-tetrahydrofolate + glycine + H2O = (6S)-5,6,7,8-tetrahydrofolate + L-serine. Its pathway is one-carbon metabolism; tetrahydrofolate interconversion. The protein operates within amino-acid biosynthesis; glycine biosynthesis; glycine from L-serine: step 1/1. Its function is as follows. Catalyzes the reversible interconversion of serine and glycine with tetrahydrofolate (THF) serving as the one-carbon carrier. This reaction serves as the major source of one-carbon groups required for the biosynthesis of purines, thymidylate, methionine, and other important biomolecules. Also exhibits THF-independent aldolase activity toward beta-hydroxyamino acids, producing glycine and aldehydes, via a retro-aldol mechanism. The chain is Serine hydroxymethyltransferase from Granulibacter bethesdensis (strain ATCC BAA-1260 / CGDNIH1).